The sequence spans 411 residues: Corticotropin-releasing factor receptor 2 (411 aa).

Residues 1–19 (MDAALLLSLLEANCSLALA) constitute a signal peptide (not cleaved). Residues 1–108 (MDAALLLSLL…EPILDDKQRK (108 aa)) lie on the Extracellular side of the membrane. Asn13, Asn41, Asn74, Asn86, and Asn94 each carry an N-linked (GlcNAc...) asparagine glycan. Intrachain disulfides connect Cys14-Cys50, Cys40-Cys83, and Cys64-Cys98. The helical transmembrane segment at 109–139 (YDLHYRIALIINYLGHCVSVVALVAAFLLFL) threads the bilayer. The Cytoplasmic segment spans residues 140–146 (VLRSIRC). Residues 147-171 (LRNVIHWNLITTFILRNITWFLLQL) form a helical membrane-spanning segment. The Extracellular segment spans residues 172–185 (IDHEVHEGNEVWCR). Cys184 and Cys254 are oxidised to a cystine. A helical membrane pass occupies residues 186–214 (CVTTIFNYFVVTNFFWMFVEGCYLHTAIV). Over 215–221 (MTYSTEH) the chain is Cytoplasmic. The chain crosses the membrane as a helical span at residues 222–249 (LRKWLFLFIGWCIPCPIIVAWAVGKLYY). Residues 250 to 265 (ENEQCWFGKEPGDLVD) are Extracellular-facing. The chain crosses the membrane as a helical span at residues 266-291 (YIYQGPIILVLLINFVFLFNIVRILM). Over 292–302 (TKLRASTTSET) the chain is Cytoplasmic. Residues 303 to 327 (IQYRKAVKATLVLLPLLGITYMLFF) traverse the membrane as a helical segment. Residues 328-334 (VNPGEDD) are Extracellular-facing. A helical membrane pass occupies residues 335 to 364 (LSQIVFIYFNSFLQSFQGFFVSVFYCFFNG). The Cytoplasmic segment spans residues 365 to 411 (EVRSALRKRWHRWQDHHALRVPVARAMSIPTSPTRISFHSIKQTAAV).

This sequence belongs to the G-protein coupled receptor 2 family. As to quaternary structure, monomer. Interacts (via N-terminal extracellular domain) with CRF, UCN, UCN2 and UCN3. In terms of processing, a N-glycosylation site within the signal peptide impedes its proper cleavage and function. Predominantly expressed in limbic regions of the brain such as the lateral septum, the entorhinal cortex, the hypothalamic ventromedial nucleus and several amygdaloid nuclei. Also detectable in lung, kidney and heart.

It localises to the cell membrane. In terms of biological role, G-protein coupled receptor for CRH (corticotropin-releasing factor), UCN (urocortin), UCN2 and UCN3. Has high affinity for UCN. Ligand binding causes a conformation change that triggers signaling via guanine nucleotide-binding proteins (G proteins) and down-stream effectors, such as adenylate cyclase. Promotes the activation of adenylate cyclase, leading to increased intracellular cAMP levels. The protein is Corticotropin-releasing factor receptor 2 (Crhr2) of Rattus norvegicus (Rat).